The sequence spans 238 residues: Ribitol-5-phosphate cytidylyltransferase 1 (238 aa).

CTP contacts are provided by residues 7–10 (LAGG) and 81–87 (GSDRNDT).

Belongs to the IspD/TarI cytidylyltransferase family. TarI subfamily.

The catalysed reaction is D-ribitol 5-phosphate + CTP + H(+) = CDP-L-ribitol + diphosphate. It functions in the pathway cell wall biogenesis; poly(ribitol phosphate) teichoic acid biosynthesis. In terms of biological role, catalyzes the transfer of the cytidylyl group of CTP to D-ribitol 5-phosphate. In Staphylococcus aureus (strain bovine RF122 / ET3-1), this protein is Ribitol-5-phosphate cytidylyltransferase 1.